Reading from the N-terminus, the 496-residue chain is uncharacterized protein (496 aa).

A compositionally biased stretch (basic and acidic residues) spans Leu118–Asn129. The segment at Leu118–Ser187 is disordered. Polar residues predominate over residues Thr151–Ser187.

This is an uncharacterized protein from Acanthamoeba polyphaga mimivirus (APMV).